A 970-amino-acid chain; its full sequence is Sodium/calcium exchanger 1 (970 aa).

Positions methionine 1–alanine 32 are cleaved as a signal peptide. Over glutamate 33–lysine 71 the chain is Extracellular. Asparagine 41 is a glycosylation site (N-linked (GlcNAc...) asparagine). A helical membrane pass occupies residues isoleucine 72–isoleucine 92. Residues alanine 93–asparagine 133 lie on the Cytoplasmic side of the membrane. Residues leucine 134–cysteine 154 traverse the membrane as a helical segment. The stretch at alanine 138 to isoleucine 178 is one Alpha-1 repeat. Over glycine 155–threonine 167 the chain is Extracellular. Residue asparagine 157 is glycosylated (N-linked (GlcNAc...) asparagine). Residues isoleucine 168–proline 188 traverse the membrane as a helical segment. The Cytoplasmic segment spans residues aspartate 189–phenylalanine 201. Residues phenylalanine 202–isoleucine 222 form a helical membrane-spanning segment. The Extracellular segment spans residues serine 223–glutamate 228. A helical membrane pass occupies residues valine 229–alanine 249. Residues aspartate 250–glycine 797 lie on the Cytoplasmic side of the membrane. Positions arginine 251–glycine 270 are putative calmodulin-binding region. A phosphoserine mark is found at serine 282 and serine 389. Calx-beta domains lie at valine 393 to serine 493 and alanine 524 to glycine 624. Ca(2+)-binding residues include glutamate 417, aspartate 453, aspartate 478, aspartate 479, isoleucine 481, glutamate 483, glutamate 486, aspartate 530, aspartate 531, aspartate 532, glutamate 548, aspartate 584, aspartate 610, glutamate 611, glutamate 612, and glutamate 715. Residues tryptophan 798–leucine 818 form a helical membrane-spanning segment. At alanine 819–histidine 821 the chain is on the extracellular side. Residues phenylalanine 822–threonine 842 traverse the membrane as a helical segment. The Alpha-2 repeat unit spans residues alanine 839–valine 875. The Cytoplasmic segment spans residues serine 843 to asparagine 871. A helical membrane pass occupies residues alanine 872–alanine 892. Over asparagine 893–threonine 903 the chain is Extracellular. Residues leucine 904 to tyrosine 924 form a helical membrane-spanning segment. The Cytoplasmic segment spans residues arginine 925–lysine 941. Residues leucine 942–glutamate 962 traverse the membrane as a helical segment. Topologically, residues alanine 963–phenylalanine 970 are extracellular.

The protein belongs to the Ca(2+):cation antiporter (CaCA) (TC 2.A.19) family. SLC8 subfamily. In terms of tissue distribution, cardiac sarcolemma (at protein level).

The protein resides in the cell membrane. It is found in the sarcolemma. It carries out the reaction Ca(2+)(in) + 3 Na(+)(out) = Ca(2+)(out) + 3 Na(+)(in). Its activity is regulated as follows. Activated by micromolar levels of Ca(2+). In the absence of regulatory Ca(2+), channels open rapidly, and then inactivate rapidly. Inactivation is enhanced by Na(+) and is inhibited by micromolar levels of Ca(2+). Its function is as follows. Mediates the exchange of one Ca(2+) ion against three to four Na(+) ions across the cell membrane, and thereby contributes to the regulation of cytoplasmic Ca(2+) levels and Ca(2+)-dependent cellular processes. Contributes to Ca(2+) transport during excitation-contraction coupling in muscle. In a first phase, voltage-gated channels mediate the rapid increase of cytoplasmic Ca(2+) levels due to release of Ca(2+) stores from the endoplasmic reticulum. SLC8A1 mediates the export of Ca(2+) from the cell during the next phase, so that cytoplasmic Ca(2+) levels rapidly return to baseline. Required for normal embryonic heart development and the onset of heart contractions. This Canis lupus familiaris (Dog) protein is Sodium/calcium exchanger 1 (SLC8A1).